Reading from the N-terminus, the 418-residue chain is Serine--tRNA ligase (418 aa).

227–229 (TSE) provides a ligand contact to L-serine. ATP contacts are provided by residues 258-260 (RRE) and Val274. Glu281 is an L-serine binding site. 345–348 (ELTS) contacts ATP. An L-serine-binding site is contributed by Thr380.

The protein belongs to the class-II aminoacyl-tRNA synthetase family. Type-1 seryl-tRNA synthetase subfamily. Homodimer. The tRNA molecule binds across the dimer.

It is found in the cytoplasm. It carries out the reaction tRNA(Ser) + L-serine + ATP = L-seryl-tRNA(Ser) + AMP + diphosphate + H(+). It catalyses the reaction tRNA(Sec) + L-serine + ATP = L-seryl-tRNA(Sec) + AMP + diphosphate + H(+). It functions in the pathway aminoacyl-tRNA biosynthesis; selenocysteinyl-tRNA(Sec) biosynthesis; L-seryl-tRNA(Sec) from L-serine and tRNA(Sec): step 1/1. Functionally, catalyzes the attachment of serine to tRNA(Ser). Is also able to aminoacylate tRNA(Sec) with serine, to form the misacylated tRNA L-seryl-tRNA(Sec), which will be further converted into selenocysteinyl-tRNA(Sec). This Rhodococcus opacus (strain B4) protein is Serine--tRNA ligase.